Here is a 367-residue protein sequence, read N- to C-terminus: Glutamate 5-kinase (367 aa).

Residue K10 coordinates ATP. The substrate site is built by S50, D137, and N149. ATP-binding positions include 169–170 (TD) and 211–217 (TGGMSTK). Residues 275-353 (AGEITVDDGA…QQIAEILGYE (79 aa)) form the PUA domain.

It belongs to the glutamate 5-kinase family.

The protein resides in the cytoplasm. The catalysed reaction is L-glutamate + ATP = L-glutamyl 5-phosphate + ADP. It functions in the pathway amino-acid biosynthesis; L-proline biosynthesis; L-glutamate 5-semialdehyde from L-glutamate: step 1/2. Catalyzes the transfer of a phosphate group to glutamate to form L-glutamate 5-phosphate. This Pectobacterium carotovorum subsp. carotovorum (strain PC1) protein is Glutamate 5-kinase.